The chain runs to 103 residues: Histone H4 (103 aa).

Position 6 is an N6-acetyl-N6-methyllysine; alternate (Lys6). N6-methyllysine; alternate is present on residues Lys6, Lys9, and Lys13. Lys13 is modified (N6-acetyl-N6-methyllysine; alternate). The DNA-binding element occupies 17-21 (KRHRK). Lys92 carries the post-translational modification N6-glutaryllysine.

It belongs to the histone H4 family. In terms of assembly, the nucleosome is a histone octamer containing two molecules each of H2A, H2B, H3 and H4 assembled in one H3-H4 heterotetramer and two H2A-H2B heterodimers. The octamer wraps approximately 147 bp of DNA. Glutarylation at Lys-92 (H4K91glu) destabilizes nucleosomes by promoting dissociation of the H2A-H2B dimers from nucleosomes.

It is found in the nucleus. Its subcellular location is the chromosome. In terms of biological role, core component of nucleosome. Nucleosomes wrap and compact DNA into chromatin, limiting DNA accessibility to the cellular machineries which require DNA as a template. Histones thereby play a central role in transcription regulation, DNA repair, DNA replication and chromosomal stability. DNA accessibility is regulated via a complex set of post-translational modifications of histones, also called histone code, and nucleosome remodeling. In Blastobotrys adeninivorans (Yeast), this protein is Histone H4 (ahsb4).